Consider the following 1131-residue polypeptide: Translation initiation factor IF-2 (1131 aa).

The segment at 49-542 (KFKGSVSSNE…AFIMPKPQQS (494 aa)) is disordered. The span at 60-75 (KSIDNGKASRVEKPEK) shows a compositional bias: basic and acidic residues. 2 stretches are compositionally biased toward polar residues: residues 76–88 (NNSVTAKADQTPS) and 108–125 (SEQNVTTGSTESEDNIQS). The segment covering 127-138 (GDRKYQHTDRRP) has biased composition (basic and acidic residues). Residues 139–152 (QGNNGEGPQTSTNS) show a composition bias toward polar residues. Basic and acidic residues-rich tracts occupy residues 164-180 (GDRRPQGQNSGDRRPYN) and 223-239 (GDRRPQGQNSGDRRPYN). Residues 411–436 (GQGGYGGRPQGQGSYGGRPQGQGGYA) are compositionally biased toward gly residues. Composition is skewed to basic and acidic residues over residues 450-479 (KDFDKDKDSGYTRSFDKKRTDPKSGEKSSI) and 487-530 (LTKE…DPNR). Residues 632 to 801 (KRPPVVCVMG…ILTAEMGELK (170 aa)) form the tr-type G domain. The tract at residues 641–648 (GHVDHGKT) is G1. 641-648 (GHVDHGKT) contributes to the GTP binding site. Positions 666–670 (GITQH) are G2. Residues 687–690 (DTPG) form a G3 region. Residues 687 to 691 (DTPGH) and 741 to 744 (NKID) each bind GTP. The tract at residues 741 to 744 (NKID) is G4. Positions 777–779 (SAH) are G5.

Belongs to the TRAFAC class translation factor GTPase superfamily. Classic translation factor GTPase family. IF-2 subfamily.

The protein localises to the cytoplasm. One of the essential components for the initiation of protein synthesis. Protects formylmethionyl-tRNA from spontaneous hydrolysis and promotes its binding to the 30S ribosomal subunits. Also involved in the hydrolysis of GTP during the formation of the 70S ribosomal complex. The chain is Translation initiation factor IF-2 from Lachnoclostridium phytofermentans (strain ATCC 700394 / DSM 18823 / ISDg) (Clostridium phytofermentans).